A 347-amino-acid polypeptide reads, in one-letter code: Isopentenyl-diphosphate delta-isomerase (347 aa).

Residues 1-31 (MDESNSQFEKRKRDHIRIALDPRSQTDGQNG) form a disordered region. A compositionally biased stretch (basic and acidic residues) spans 8–20 (FEKRKRDHIRIAL). A substrate-binding site is contributed by 11-12 (RK). Residues S72, 73-75 (SMT), S103, and N132 each bind FMN. 103-105 (SQR) is a substrate binding site. Position 166 (Q166) interacts with substrate. Position 167 (E167) interacts with Mg(2+). FMN is bound by residues K198, S223, T228, 279–281 (GVR), and 300–301 (AK).

It belongs to the IPP isomerase type 2 family. In terms of assembly, homooctamer. Dimer of tetramers. FMN serves as cofactor. NADPH is required as a cofactor. Requires Mg(2+) as cofactor.

The protein localises to the cytoplasm. It carries out the reaction isopentenyl diphosphate = dimethylallyl diphosphate. Involved in the biosynthesis of isoprenoids. Catalyzes the 1,3-allylic rearrangement of the homoallylic substrate isopentenyl (IPP) to its allylic isomer, dimethylallyl diphosphate (DMAPP). The sequence is that of Isopentenyl-diphosphate delta-isomerase from Bdellovibrio bacteriovorus (strain ATCC 15356 / DSM 50701 / NCIMB 9529 / HD100).